Here is a 224-residue protein sequence, read N- to C-terminus: MPARAPRRLVQGPRGTWLLGSLWVWVLCGLGMAGSLGTPQPCQAPQQWEGRQVLYQQSSGHNNRALVSYDGLNQRVRVLDERKALIPCKRLFEYILLYKEGVMFQIEQATKQCAKIPLVESWDPLDIPQNSTFEDQYSIGGPQEQILVQEWSDRRTARSYETWIGVYTAKDCYPVQETFIRNYTVVMSTRFFDVQLGIKDPSVFTPPSTCQAAQPEKMSDGCSL.

Positions 1-37 are cleaved as a signal peptide; that stretch reads MPARAPRRLVQGPRGTWLLGSLWVWVLCGLGMAGSLG. 3 disulfide bridges follow: cysteine 42/cysteine 172, cysteine 88/cysteine 222, and cysteine 113/cysteine 210. Residues asparagine 130 and asparagine 182 are each glycosylated (N-linked (GlcNAc...) asparagine).

This sequence belongs to the ependymin family. As to quaternary structure, homodimer. N-glycosylated; the glycan contains mannose-6-phosphate moieties. Detected in brain, small intestine and in soleus, extensor digitorum longus and white gastrocnemius (at protein level). Detected in brain and skeletal muscle, and at lower leavels in heart.

Its subcellular location is the lysosome lumen. The protein resides in the secreted. Binds anionic lipids and gangliosides at acidic pH. In Mus musculus (Mouse), this protein is Mammalian ependymin-related protein 1 (Epdr1).